A 259-amino-acid polypeptide reads, in one-letter code: Phosphoadenosine 5'-phosphosulfate reductase (259 aa).

Catalysis depends on C244, which acts as the Nucleophile; cysteine thiosulfonate intermediate.

Belongs to the PAPS reductase family. CysH subfamily.

It localises to the cytoplasm. The enzyme catalyses [thioredoxin]-disulfide + sulfite + adenosine 3',5'-bisphosphate + 2 H(+) = [thioredoxin]-dithiol + 3'-phosphoadenylyl sulfate. The protein operates within sulfur metabolism; hydrogen sulfide biosynthesis; sulfite from sulfate: step 3/3. Functionally, catalyzes the formation of sulfite from phosphoadenosine 5'-phosphosulfate (PAPS) using thioredoxin as an electron donor. The chain is Phosphoadenosine 5'-phosphosulfate reductase from Vibrio parahaemolyticus serotype O3:K6 (strain RIMD 2210633).